Consider the following 361-residue polypeptide: Beta-hexosaminidase (361 aa).

Substrate contacts are provided by residues D69, R77, R144, and 174–175; that span reads KH. H187 (proton donor/acceptor) is an active-site residue. D258 functions as the Nucleophile in the catalytic mechanism.

This sequence belongs to the glycosyl hydrolase 3 family. NagZ subfamily.

The protein resides in the cytoplasm. It catalyses the reaction Hydrolysis of terminal non-reducing N-acetyl-D-hexosamine residues in N-acetyl-beta-D-hexosaminides.. It participates in cell wall biogenesis; peptidoglycan recycling. Functionally, plays a role in peptidoglycan recycling by cleaving the terminal beta-1,4-linked N-acetylglucosamine (GlcNAc) from peptide-linked peptidoglycan fragments, giving rise to free GlcNAc, anhydro-N-acetylmuramic acid and anhydro-N-acetylmuramic acid-linked peptides. The polypeptide is Beta-hexosaminidase (Neisseria meningitidis serogroup C / serotype 2a (strain ATCC 700532 / DSM 15464 / FAM18)).